The primary structure comprises 466 residues: Asparagine--tRNA ligase (466 aa).

Belongs to the class-II aminoacyl-tRNA synthetase family. In terms of assembly, homodimer.

It is found in the cytoplasm. The catalysed reaction is tRNA(Asn) + L-asparagine + ATP = L-asparaginyl-tRNA(Asn) + AMP + diphosphate + H(+). This is Asparagine--tRNA ligase from Salmonella choleraesuis (strain SC-B67).